A 409-amino-acid polypeptide reads, in one-letter code: Putative competence-damage inducible protein (409 aa).

This sequence belongs to the CinA family.

This is Putative competence-damage inducible protein from Clostridium botulinum (strain 657 / Type Ba4).